Here is a 275-residue protein sequence, read N- to C-terminus: Large ribosomal subunit protein uL2 (275 aa).

Disordered regions lie at residues 28–49 and 224–246; these read APHA…HGRI and AMNP…NPHP.

Belongs to the universal ribosomal protein uL2 family. Part of the 50S ribosomal subunit. Forms a bridge to the 30S subunit in the 70S ribosome.

Functionally, one of the primary rRNA binding proteins. Required for association of the 30S and 50S subunits to form the 70S ribosome, for tRNA binding and peptide bond formation. It has been suggested to have peptidyltransferase activity; this is somewhat controversial. Makes several contacts with the 16S rRNA in the 70S ribosome. The sequence is that of Large ribosomal subunit protein uL2 from Stenotrophomonas maltophilia (strain R551-3).